Consider the following 337-residue polypeptide: Aspartate carbamoyltransferase catalytic subunit (337 aa).

Positions 54 and 55 each coordinate carbamoyl phosphate. Lys82 provides a ligand contact to L-aspartate. The carbamoyl phosphate site is built by Arg104, His134, and Gln137. Arg177 and Arg232 together coordinate L-aspartate. Carbamoyl phosphate-binding residues include Gly277 and Pro278.

The protein belongs to the aspartate/ornithine carbamoyltransferase superfamily. ATCase family. In terms of assembly, heterododecamer (2C3:3R2) of six catalytic PyrB chains organized as two trimers (C3), and six regulatory PyrI chains organized as three dimers (R2).

The enzyme catalyses carbamoyl phosphate + L-aspartate = N-carbamoyl-L-aspartate + phosphate + H(+). It participates in pyrimidine metabolism; UMP biosynthesis via de novo pathway; (S)-dihydroorotate from bicarbonate: step 2/3. In terms of biological role, catalyzes the condensation of carbamoyl phosphate and aspartate to form carbamoyl aspartate and inorganic phosphate, the committed step in the de novo pyrimidine nucleotide biosynthesis pathway. This is Aspartate carbamoyltransferase catalytic subunit from Arthrobacter sp. (strain FB24).